The primary structure comprises 487 residues: Serine/threonine-protein kinase 4 (487 aa).

Met-1 carries the N-acetylmethionine modification. The residue at position 3 (Thr-3) is a Phosphothreonine. The Protein kinase domain maps to Phe-30–Val-281. ATP-binding positions include Leu-36–Val-44 and Lys-59. The active-site Proton acceptor is the Asp-149. Phosphothreonine; by autocatalysis is present on Thr-183. At Ser-265 the chain carries Phosphoserine. A coiled-coil region spans residues Leu-290–Arg-310. Positions Gln-305–Glu-337 are disordered. Positions Asp-313–Asp-326 are enriched in acidic residues. Residue Ser-320 is modified to Phosphoserine. Residues Thr-340 and Thr-367 each carry the phosphothreonine modification. Position 387 is a phosphothreonine; by PKB/AKT1 (Thr-387). Ser-410 and Ser-414 each carry phosphoserine. The residue at position 433 (Tyr-433) is a Phosphotyrosine. The 48-residue stretch at Tyr-433–Lys-480 folds into the SARAH domain.

It belongs to the protein kinase superfamily. STE Ser/Thr protein kinase family. STE20 subfamily. As to quaternary structure, homodimer; mediated via the coiled-coil region. Interacts with NORE1, which inhibits autoactivation. Interacts with and stabilizes SAV1. Interacts with RASSF1. Interacts with FOXO3. Interacts with RASSF2 (via SARAH domain). Interacts with AR, PKB/AKT1, TNNI3 and SIRT1. Interacts with DLG5 (via PDZ domain 3). Interacts with MARK3 and SCRIB in the presence of DLG5. It depends on Mg(2+) as a cofactor. Post-translationally, autophosphorylated on serine and threonine residues. Phosphorylation at Thr-387 by PKB/AKT1, leads to inhibition of its: kinase activity, nuclear translocation and autophosphorylation at Thr-183. It also diminishes its cleavage by caspases and its ability to phosphorylate FOXO3. Proteolytically cleaved by caspase-3 during apoptosis at Asp-326 and Asp-349 resulting in a 37 kDa or a 39 kDa subunit respectively. The 39 kDa subunit is further cleaved into the 37 kDa form. Proteolytic cleavage results in kinase activation and nuclear translocation of the truncated form (MST1/N). It is less likely that cleavage at Asp-349 is a prerequisite for activation as this site is not conserved in the murine ortholog.

It localises to the cytoplasm. The protein resides in the nucleus. The catalysed reaction is L-seryl-[protein] + ATP = O-phospho-L-seryl-[protein] + ADP + H(+). The enzyme catalyses L-threonyl-[protein] + ATP = O-phospho-L-threonyl-[protein] + ADP + H(+). Its activity is regulated as follows. Inhibited by the C-terminal non-catalytic region. Activated by caspase-cleavage. Full activation also requires homodimerization and autophosphorylation of Thr-183. Activated by RASSF1 which acts by preventing its dephosphorylation. Stress-activated, pro-apoptotic kinase which, following caspase-cleavage, enters the nucleus and induces chromatin condensation followed by internucleosomal DNA fragmentation. Key component of the Hippo signaling pathway which plays a pivotal role in organ size control and tumor suppression by restricting proliferation and promoting apoptosis. The core of this pathway is composed of a kinase cascade wherein STK3/MST2 and STK4/MST1, in complex with its regulatory protein SAV1, phosphorylates and activates LATS1/2 in complex with its regulatory protein MOB1, which in turn phosphorylates and inactivates YAP1 oncoprotein and WWTR1/TAZ. Phosphorylation of YAP1 by LATS2 inhibits its translocation into the nucleus to regulate cellular genes important for cell proliferation, cell death, and cell migration. STK3/MST2 and STK4/MST1 are required to repress proliferation of mature hepatocytes, to prevent activation of facultative adult liver stem cells (oval cells), and to inhibit tumor formation. Phosphorylates 'Ser-14' of histone H2B (H2BS14ph) during apoptosis. Phosphorylates FOXO3 upon oxidative stress, which results in its nuclear translocation and cell death initiation. Phosphorylates MOBKL1A, MOBKL1B and RASSF2. Phosphorylates TNNI3 (cardiac Tn-I) and alters its binding affinity to TNNC1 (cardiac Tn-C) and TNNT2 (cardiac Tn-T). Phosphorylates FOXO1 on 'Ser-212' and regulates its activation and stimulates transcription of PMAIP1 in a FOXO1-dependent manner. Phosphorylates SIRT1 and inhibits SIRT1-mediated p53/TP53 deacetylation, thereby promoting p53/TP53 dependent transcription and apoptosis upon DNA damage. Acts as an inhibitor of PKB/AKT1. Phosphorylates AR on 'Ser-650' and suppresses its activity by intersecting with PKB/AKT1 signaling and antagonizing formation of AR-chromatin complexes. This is Serine/threonine-protein kinase 4 (STK4) from Otolemur garnettii (Small-eared galago).